The chain runs to 469 residues: Adenosylhomocysteinase (469 aa).

Positions 63, 139, and 164 each coordinate substrate. 165–167 (TTT) is an NAD(+) binding site. Lysine 194 and aspartate 198 together coordinate substrate. Residues asparagine 199, 228–233 (GYGDVG), glutamate 251, asparagine 300, 321–323 (IGH), and asparagine 375 each bind NAD(+).

It belongs to the adenosylhomocysteinase family. The cofactor is NAD(+).

The protein localises to the cytoplasm. It carries out the reaction S-adenosyl-L-homocysteine + H2O = L-homocysteine + adenosine. It participates in amino-acid biosynthesis; L-homocysteine biosynthesis; L-homocysteine from S-adenosyl-L-homocysteine: step 1/1. Its function is as follows. May play a key role in the regulation of the intracellular concentration of adenosylhomocysteine. This Pseudomonas syringae pv. syringae (strain B728a) protein is Adenosylhomocysteinase.